A 390-amino-acid chain; its full sequence is Alkanesulfonate monooxygenase 1 (390 aa).

The interval 364–390 is disordered; sequence TGSSVNTGPFGETIAGDHRPKSLASAS.

Belongs to the SsuD family.

The catalysed reaction is an alkanesulfonate + FMNH2 + O2 = an aldehyde + FMN + sulfite + H2O + 2 H(+). Catalyzes the desulfonation of aliphatic sulfonates. This Mesorhizobium japonicum (strain LMG 29417 / CECT 9101 / MAFF 303099) (Mesorhizobium loti (strain MAFF 303099)) protein is Alkanesulfonate monooxygenase 1 (ssuD1).